Here is a 193-residue protein sequence, read N- to C-terminus: Adenylate kinase (193 aa).

10-18 (GVPGVGGTT) contributes to the ATP binding site.

Belongs to the archaeal adenylate kinase family. As to quaternary structure, monomer.

Its subcellular location is the cytoplasm. The catalysed reaction is AMP + ATP = 2 ADP. This chain is Adenylate kinase, found in Methanococcus aeolicus (strain ATCC BAA-1280 / DSM 17508 / OCM 812 / Nankai-3).